We begin with the raw amino-acid sequence, 413 residues long: Serine hydroxymethyltransferase (413 aa).

(6S)-5,6,7,8-tetrahydrofolate is bound by residues Leu-117 and 121 to 123 (GHL). Position 226 is an N6-(pyridoxal phosphate)lysine (Lys-226). 349–351 (SPF) serves as a coordination point for (6S)-5,6,7,8-tetrahydrofolate.

The protein belongs to the SHMT family. As to quaternary structure, homodimer. Pyridoxal 5'-phosphate is required as a cofactor.

Its subcellular location is the cytoplasm. The enzyme catalyses (6R)-5,10-methylene-5,6,7,8-tetrahydrofolate + glycine + H2O = (6S)-5,6,7,8-tetrahydrofolate + L-serine. Its pathway is one-carbon metabolism; tetrahydrofolate interconversion. It functions in the pathway amino-acid biosynthesis; glycine biosynthesis; glycine from L-serine: step 1/1. Functionally, catalyzes the reversible interconversion of serine and glycine with tetrahydrofolate (THF) serving as the one-carbon carrier. This reaction serves as the major source of one-carbon groups required for the biosynthesis of purines, thymidylate, methionine, and other important biomolecules. Also exhibits THF-independent aldolase activity toward beta-hydroxyamino acids, producing glycine and aldehydes, via a retro-aldol mechanism. This is Serine hydroxymethyltransferase from Listeria monocytogenes serovar 1/2a (strain ATCC BAA-679 / EGD-e).